The sequence spans 670 residues: Solute carrier organic anion transporter family member 1A5 (670 aa).

Residues 1-20 lie on the Cytoplasmic side of the membrane; it reads MGETEKRIATHGVRCFSKIK. The chain crosses the membrane as a helical span at residues 21–40; it reads MFLLALTCAYVSKSLSGIYM. Topologically, residues 41–59 are extracellular; the sequence is NSMLTQIERQFDIPTSIVG. Residues 60-80 form a helical membrane-spanning segment; sequence LINGSFEIGNLLLIILVSYFG. The Cytoplasmic portion of the chain corresponds to 81–86; it reads TKLHRP. A helical membrane pass occupies residues 87 to 111; it reads IMIGIGCVIMGLGCFLMSLPHFLMG. Topologically, residues 112–155 are extracellular; the sequence is RYEYETTISPTSNLSSNSFLCMENRTQTLKPTQDPAECVKEMKS. 2 N-linked (GlcNAc...) asparagine glycosylation sites follow: Asn-124 and Asn-135. A helical transmembrane segment spans residues 156 to 184; the sequence is LMWIYVLVGNIIRGIGETPIMPLGISYIE. At 185–203 the chain is on the cytoplasmic side; that stretch reads DFAKSENSPLYIGILESGK. A helical transmembrane segment spans residues 204 to 224; the sequence is MIGPIVGLLLGSFCARIYVDT. At 225 to 242 the chain is on the extracellular side; sequence GSVNTDDLTITPTDTRWV. The chain crosses the membrane as a helical span at residues 243–267; that stretch reads GAWWIGFLVCAGVNILTSIPFFFFP. At 268-311 the chain is on the cytoplasmic side; sequence KTLPKEGLQDNVARTENDKEEKHREKAKEENRGITKDFLPFMKS. The helical transmembrane segment at 312-333 threads the bilayer; the sequence is LSCNPIYMLLILTSVLQINAFI. Residues 334-353 are Extracellular-facing; that stretch reads NMFTFLPKYLEQQYGKSTSE. The chain crosses the membrane as a helical span at residues 354–377; the sequence is VVLLIGVCNLPPICIGYLLIGFIM. The Cytoplasmic segment spans residues 378 to 381; that stretch reads KKFR. A helical transmembrane segment spans residues 382-405; sequence ITVKKAAYMAFCLSLFEYLLSYFH. Residues 406–513 lie on the Extracellular side of the membrane; sequence FMISCDNFQV…PECANKLQYF (108 aa). The Kazal-like domain maps to 433-488; that stretch reads NKVLADCNTRCSCLTNTWDPVCGDNGLSYMSACLAGCEKSVGMGTHMVFQNCSCIQ. 3 disulfides stabilise this stretch: Cys-439–Cys-469, Cys-445–Cys-465, and Cys-454–Cys-486. N-linked (GlcNAc...) asparagine glycosylation is found at Asn-483 and Asn-492. A helical membrane pass occupies residues 514-536; that stretch reads LIMSVIGSFIYSITAIPGYMVLL. The Cytoplasmic segment spans residues 537–545; that stretch reads RCIKSEEKS. The chain crosses the membrane as a helical span at residues 546–571; that stretch reads LGIGLHAFCTRIFAGIPAPIYFGALI. At 572–605 the chain is on the extracellular side; the sequence is DRTCLHWGTLKCGEPGACRIYNINNFRRIYLVLP. Residues 606–623 traverse the membrane as a helical segment; it reads AALRGSSYLPAFFILILM. Over 624–670 the chain is Cytoplasmic; the sequence is RKFQLPGEMYSSETELADMKQTVKKSECTDVHGIPKVENDGELKTKL.

This sequence belongs to the organo anion transporter (TC 2.A.60) family. As to expression, expressed in brain, choroid plexus and lung, but not in liver or kidney.

It localises to the cell membrane. It is found in the basal cell membrane. The enzyme catalyses taurocholate(out) = taurocholate(in). It carries out the reaction glycocholate(out) = glycocholate(in). It catalyses the reaction taurochenodeoxycholate(out) = taurochenodeoxycholate(in). The catalysed reaction is tauroursodeoxycholate(out) = tauroursodeoxycholate(in). The enzyme catalyses 3,3',5'-triiodo-L-thyronine(out) = 3,3',5'-triiodo-L-thyronine(in). It carries out the reaction L-thyroxine(out) = L-thyroxine(in). It catalyses the reaction taurodeoxycholate(out) = taurodeoxycholate(in). The catalysed reaction is glycodeoxycholate(out) = glycodeoxycholate(in). The enzyme catalyses glycochenodeoxycholate(out) = glycochenodeoxycholate(in). It carries out the reaction glycoursodeoxycholate(out) = glycoursodeoxycholate(in). It catalyses the reaction estrone 3-sulfate(out) = estrone 3-sulfate(in). The catalysed reaction is prostaglandin E2(out) = prostaglandin E2(in). The enzyme catalyses substance P(out) = substance P(in). Na(+)-independent transporter that mediates the cellular uptake of a broad range of organic anions such as the endogenous bile salts cholate and deoxycholate, either in their unconjugated or conjugated forms (taurocholate and glycocholate), estrone 3-sulfate and prostaglandin E2, at the plasma membrane. Responsible for intestinal absorption of bile acids. Capable of thyroid hormone transport (both T3 or 3,3',5'-triiodo-L-thyronine, and T4 or L-tyroxine). Plays roles in blood-brain and -cerebrospinal fluid barrier transport of organic anions and signal mediators, and in hormone uptake by neural cells. May also play a role in the reuptake of neuropeptides such as substance P/TAC1 and vasoactive intestinal peptide/VIP released from retinal neurons. Shows a pH-sensitive substrate specificity which may be ascribed to the protonation state of the binding site and leads to a stimulation of substrate transport in an acidic microenvironment. Hydrogencarbonate/HCO3(-) acts as the probable counteranion that exchanges for organic anions. May contribute to regulate the transport of organic compounds in testis across the blood-testis-barrier. The chain is Solute carrier organic anion transporter family member 1A5 (Slco1a5) from Mus musculus (Mouse).